A 342-amino-acid chain; its full sequence is Dihydroorotase (342 aa).

His-13 and His-15 together coordinate Zn(2+). Residues 15-17 (HLR) and Asn-41 contribute to the substrate site. Zn(2+)-binding residues include Lys-98, His-135, and His-173. At Lys-98 the chain carries N6-carboxylysine. A substrate-binding site is contributed by His-135. Leu-218 contributes to the substrate binding site. A Zn(2+)-binding site is contributed by Asp-246. Residue Asp-246 is part of the active site. The substrate site is built by His-250 and Ala-262.

Belongs to the metallo-dependent hydrolases superfamily. DHOase family. Class II DHOase subfamily. As to quaternary structure, homodimer. Zn(2+) serves as cofactor.

The enzyme catalyses (S)-dihydroorotate + H2O = N-carbamoyl-L-aspartate + H(+). The protein operates within pyrimidine metabolism; UMP biosynthesis via de novo pathway; (S)-dihydroorotate from bicarbonate: step 3/3. Catalyzes the reversible cyclization of carbamoyl aspartate to dihydroorotate. The polypeptide is Dihydroorotase (Vibrio vulnificus (strain CMCP6)).